The primary structure comprises 191 residues: Fe/S biogenesis protein NfuA (191 aa).

[4Fe-4S] cluster-binding residues include Cys149 and Cys152.

The protein belongs to the NfuA family. As to quaternary structure, homodimer. It depends on [4Fe-4S] cluster as a cofactor.

In terms of biological role, involved in iron-sulfur cluster biogenesis. Binds a 4Fe-4S cluster, can transfer this cluster to apoproteins, and thereby intervenes in the maturation of Fe/S proteins. Could also act as a scaffold/chaperone for damaged Fe/S proteins. The chain is Fe/S biogenesis protein NfuA from Citrobacter koseri (strain ATCC BAA-895 / CDC 4225-83 / SGSC4696).